The chain runs to 573 residues: Sulfite reductase [NADPH] hemoprotein beta-component (573 aa).

Residues C438, C444, C483, and C487 each coordinate [4Fe-4S] cluster. Residue C487 coordinates siroheme.

This sequence belongs to the nitrite and sulfite reductase 4Fe-4S domain family. As to quaternary structure, alpha(8)-beta(8). The alpha component is a flavoprotein, the beta component is a hemoprotein. The cofactor is siroheme. [4Fe-4S] cluster serves as cofactor.

It carries out the reaction hydrogen sulfide + 3 NADP(+) + 3 H2O = sulfite + 3 NADPH + 4 H(+). It functions in the pathway sulfur metabolism; hydrogen sulfide biosynthesis; hydrogen sulfide from sulfite (NADPH route): step 1/1. Functionally, component of the sulfite reductase complex that catalyzes the 6-electron reduction of sulfite to sulfide. This is one of several activities required for the biosynthesis of L-cysteine from sulfate. The sequence is that of Sulfite reductase [NADPH] hemoprotein beta-component from Geobacillus thermodenitrificans (strain NG80-2).